We begin with the raw amino-acid sequence, 184 residues long: Inosine triphosphate pyrophosphatase (184 aa).

9–14 (TSNASK) serves as a coordination point for ITP. Residue glutamate 38 coordinates Mg(2+). ITP-binding positions include lysine 50, 66 to 67 (DT), lysine 83, 142 to 145 (FGWD), lysine 163, and 168 to 169 (HR).

This sequence belongs to the HAM1 NTPase family. Homodimer. Mg(2+) is required as a cofactor. Requires Mn(2+) as cofactor.

It is found in the cytoplasm. The protein resides in the nucleus. The enzyme catalyses ITP + H2O = IMP + diphosphate + H(+). It catalyses the reaction dITP + H2O = dIMP + diphosphate + H(+). The catalysed reaction is XTP + H2O = XMP + diphosphate + H(+). Functionally, pyrophosphatase that hydrolyzes non-canonical purine nucleotides such as inosine triphosphate (ITP), deoxyinosine triphosphate (dITP) or xanthosine 5'-triphosphate (XTP) to their respective monophosphate derivatives. The enzyme does not distinguish between the deoxy- and ribose forms. Probably excludes non-canonical purines from RNA and DNA precursor pools, thus preventing their incorporation into RNA and DNA and avoiding chromosomal lesions. The sequence is that of Inosine triphosphate pyrophosphatase from Tuber melanosporum (strain Mel28) (Perigord black truffle).